The following is a 480-amino-acid chain: PTS system sucrose-specific EIIBC component (480 aa).

Residues 4–87 form the PTS EIIB type-1 domain; the sequence is KKSAENILQA…EKITGKEASS (84 aa). Cysteine 26 serves as the catalytic Phosphocysteine intermediate; for EIIB activity. Helical transmembrane passes span 109-129, 158-178, 182-202, 264-284, 303-323, 349-369, 405-425, and 449-469; these read LSDI…LMGI, MINI…GFSA, FGGN…PELM, LLTP…FVGP, FGGA…VITG, PIAT…FFII, PFIG…FFKV, and LHYG…TYAL. A PTS EIIC type-1 domain is found at 120-480; the sequence is IVAGGLLMGI…YRKKYRNIEA (361 aa).

It is found in the cell membrane. It carries out the reaction N(pros)-phospho-L-histidyl-[protein](out) + sucrose = sucrose 6(G)-phosphate(in) + L-histidyl-[protein]. The phosphoenolpyruvate-dependent sugar phosphotransferase system (sugar PTS), a major carbohydrate active transport system, catalyzes the phosphorylation of incoming sugar substrates concomitantly with their translocation across the cell membrane. This system is involved in sucrose transport. The chain is PTS system sucrose-specific EIIBC component from Staphylococcus xylosus.